The primary structure comprises 850 residues: DNA mismatch repair protein MutS (850 aa).

Residue 608–615 participates in ATP binding; it reads GPNMGGKS.

It belongs to the DNA mismatch repair MutS family.

This protein is involved in the repair of mismatches in DNA. It is possible that it carries out the mismatch recognition step. This protein has a weak ATPase activity. This Thiobacillus denitrificans (strain ATCC 25259 / T1) protein is DNA mismatch repair protein MutS.